Reading from the N-terminus, the 217-residue chain is MAYPGYGGGFGNFSIQVPGMQMGQPVPETGPAILLDGYSGPAYSDTYSSAGDSVYTYFSAVAGQDGEVDAEELQRCLTQSGINGTYSPFSLETCRIMIAMLDRDHTGKMGFNAFKELWAALNAWKENFMTVDQDGSGTVEHHELRQAIGLMGYRLSPQTLTTIVKRYSKNGRIFFDDYVACCVKLRALTDFFRKRDHLQQGSANFIYDDFLQGTMAI.

EF-hand domains lie at 48-83 (SSAG…SGIN), 89-122 (FSLE…AALN), 119-154 (AALN…MGYR), and 155-180 (LSPQ…DYVA). The Ca(2+) site is built by Asp65, Asp69, and Glu71. Ca(2+)-binding residues include Asp132, Asp134, Ser136, Thr138, and Glu143.

As to quaternary structure, homodimer. Interacts with SRI and LCP1. Detected in neutrophils and macrophages (at protein level). Highly expressed in bone marrow.

Its subcellular location is the cytoplasm. It is found in the cytoplasmic granule membrane. Its function is as follows. Calcium-binding protein that may play a role in the adhesion of neutrophils to fibronectin. May play a role in the formation of focal adhesions. The sequence is that of Grancalcin (GCA) from Homo sapiens (Human).